The sequence spans 376 residues: Cobalt-precorrin-5B C(1)-methyltransferase (376 aa).

A disordered region spans residues Lys353–Thr376. Over residues Arg355 to Pro366 the composition is skewed to polar residues.

This sequence belongs to the CbiD family.

The catalysed reaction is Co-precorrin-5B + S-adenosyl-L-methionine = Co-precorrin-6A + S-adenosyl-L-homocysteine. Its pathway is cofactor biosynthesis; adenosylcobalamin biosynthesis; cob(II)yrinate a,c-diamide from sirohydrochlorin (anaerobic route): step 6/10. Functionally, catalyzes the methylation of C-1 in cobalt-precorrin-5B to form cobalt-precorrin-6A. The protein is Cobalt-precorrin-5B C(1)-methyltransferase of Agrobacterium fabrum (strain C58 / ATCC 33970) (Agrobacterium tumefaciens (strain C58)).